Consider the following 88-residue polypeptide: Small ribosomal subunit protein uS17 (88 aa).

This sequence belongs to the universal ribosomal protein uS17 family. Part of the 30S ribosomal subunit.

One of the primary rRNA binding proteins, it binds specifically to the 5'-end of 16S ribosomal RNA. The polypeptide is Small ribosomal subunit protein uS17 (Brevibacillus brevis (strain 47 / JCM 6285 / NBRC 100599)).